A 95-amino-acid chain; its full sequence is Small ribosomal subunit protein bS6 (95 aa).

It belongs to the bacterial ribosomal protein bS6 family.

Functionally, binds together with bS18 to 16S ribosomal RNA. This chain is Small ribosomal subunit protein bS6, found in Clostridium novyi (strain NT).